The primary structure comprises 270 residues: Formamidopyrimidine-DNA glycosylase (270 aa).

The active-site Schiff-base intermediate with DNA is the P2. E3 functions as the Proton donor in the catalytic mechanism. Catalysis depends on K58, which acts as the Proton donor; for beta-elimination activity. DNA is bound by residues H91, R110, and R151. Residues F236–R270 form an FPG-type zinc finger. R260 functions as the Proton donor; for delta-elimination activity in the catalytic mechanism.

The protein belongs to the FPG family. In terms of assembly, monomer. Requires Zn(2+) as cofactor.

The enzyme catalyses Hydrolysis of DNA containing ring-opened 7-methylguanine residues, releasing 2,6-diamino-4-hydroxy-5-(N-methyl)formamidopyrimidine.. It catalyses the reaction 2'-deoxyribonucleotide-(2'-deoxyribose 5'-phosphate)-2'-deoxyribonucleotide-DNA = a 3'-end 2'-deoxyribonucleotide-(2,3-dehydro-2,3-deoxyribose 5'-phosphate)-DNA + a 5'-end 5'-phospho-2'-deoxyribonucleoside-DNA + H(+). Involved in base excision repair of DNA damaged by oxidation or by mutagenic agents. Acts as a DNA glycosylase that recognizes and removes damaged bases. Has a preference for oxidized purines, such as 7,8-dihydro-8-oxoguanine (8-oxoG). Has AP (apurinic/apyrimidinic) lyase activity and introduces nicks in the DNA strand. Cleaves the DNA backbone by beta-delta elimination to generate a single-strand break at the site of the removed base with both 3'- and 5'-phosphates. The sequence is that of Formamidopyrimidine-DNA glycosylase from Stutzerimonas stutzeri (strain A1501) (Pseudomonas stutzeri).